The following is a 527-amino-acid chain: Glutamate--cysteine ligase (527 aa).

Belongs to the glutamate--cysteine ligase type 1 family. Type 1 subfamily.

It carries out the reaction L-cysteine + L-glutamate + ATP = gamma-L-glutamyl-L-cysteine + ADP + phosphate + H(+). It functions in the pathway sulfur metabolism; glutathione biosynthesis; glutathione from L-cysteine and L-glutamate: step 1/2. The polypeptide is Glutamate--cysteine ligase (Pseudomonas aeruginosa (strain LESB58)).